The primary structure comprises 412 residues: Class E basic helix-loop-helix protein 40 (412 aa).

The tract at residues 1 to 139 is essential for interaction with BMAL1, E-box binding and repressor activity against the CLOCK-BMAL1 heterodimer; the sequence is MERIPSAQPP…LSGRNVETGQ (139 aa). Residues 52-107 form the bHLH domain; the sequence is TYKLPHRLIEKKRRDRINECIAQLKDLLPEHLKLTTLGHLEKAVVLELTLKHVKAL. Residues 75–79 form a necessary for interaction with RXRA and repressor activity against RXRA region; the sequence is LKDLL. One can recognise an Orange domain in the interval 142–175; it reads FCSGFQTCAREVLQYLAKHENTRDLKSSQLVTHL. Lys159 is covalently cross-linked (Glycyl lysine isopeptide (Lys-Gly) (interchain with G-Cter in SUMO1, SUMO2 and SUMO3)). A Glycyl lysine isopeptide (Lys-Gly) (interchain with G-Cter in SUMO2) cross-link involves residue Lys167. Disordered regions lie at residues 183–259 and 275–309; these read LQGG…SEQL and IGAI…LISS. Ser235 is modified (phosphoserine). Positions 248–259 are enriched in basic and acidic residues; that stretch reads ESEKGDLRSEQL. Residue Lys279 forms a Glycyl lysine isopeptide (Lys-Gly) (interchain with G-Cter in SUMO1); alternate linkage. A Glycyl lysine isopeptide (Lys-Gly) (interchain with G-Cter in SUMO1, SUMO2 and SUMO3); alternate cross-link involves residue Lys279. Lys279 participates in a covalent cross-link: Glycyl lysine isopeptide (Lys-Gly) (interchain with G-Cter in SUMO2); alternate. Lys288 participates in a covalent cross-link: Glycyl lysine isopeptide (Lys-Gly) (interchain with G-Cter in SUMO2). Ser383 is subject to Phosphoserine.

In terms of assembly, homodimer. Heterodimer with BHLHE41/DEC2. Interacts with TCF3/E47. Interacts with ubiquitin-conjugating enzyme UBE2I/UBC9. Interacts with HDAC1, SUMO1, RXRA and BMAL1. In terms of processing, ubiquitinated; which may lead to proteasomal degradation. Sumoylation inhibits its ubiquitination and promotes its negative regulation of the CLOCK-BMAL1 heterodimer transcriptional activator activity.

It is found in the cytoplasm. It localises to the nucleus. Functionally, transcriptional repressor involved in the regulation of the circadian rhythm by negatively regulating the activity of the clock genes and clock-controlled genes. Acts as the negative limb of a novel autoregulatory feedback loop (DEC loop) which differs from the one formed by the PER and CRY transcriptional repressors (PER/CRY loop). Both these loops are interlocked as it represses the expression of PER1/2 and in turn is repressed by PER1/2 and CRY1/2. Represses the activity of the circadian transcriptional activator: CLOCK-BMAL1|BMAL2 heterodimer by competing for the binding to E-box elements (5'-CACGTG-3') found within the promoters of its target genes. Negatively regulates its own expression and the expression of DBP and BHLHE41/DEC2. Acts as a corepressor of RXR and the RXR-LXR heterodimers and represses the ligand-induced RXRA and NR1H3/LXRA transactivation activity. May be involved in the regulation of chondrocyte differentiation via the cAMP pathway. Represses the transcription of NR0B2 and attentuates the transactivation of NR0B2 by the CLOCK-BMAL1 complex. Drives the circadian rhythm of blood pressure through transcriptional repression of ATP1B1 in the cardiovascular system. This is Class E basic helix-loop-helix protein 40 (BHLHE40) from Pongo abelii (Sumatran orangutan).